We begin with the raw amino-acid sequence, 426 residues long: Proline--tRNA ligase (426 aa).

This sequence belongs to the class-II aminoacyl-tRNA synthetase family. ProS type 2 subfamily. Homodimer.

The protein localises to the cytoplasm. The enzyme catalyses tRNA(Pro) + L-proline + ATP = L-prolyl-tRNA(Pro) + AMP + diphosphate. Functionally, catalyzes the attachment of proline to tRNA(Pro) in a two-step reaction: proline is first activated by ATP to form Pro-AMP and then transferred to the acceptor end of tRNA(Pro). The polypeptide is Proline--tRNA ligase (Anaplasma phagocytophilum (strain HZ)).